Consider the following 178-residue polypeptide: Nascent polypeptide-associated complex subunit alpha (178 aa).

In terms of domain architecture, NAC-A/B spans 16-80; that stretch reads PKNEKKAREL…AKVDDMNQRI (65 aa). Positions 82–100 are enriched in low complexity; that stretch reads EAQAQQAQQEALQKAAADA. Positions 82 to 145 are disordered; sequence EAQAQQAQQE…DETGLDPKDI (64 aa). A compositionally biased stretch (basic and acidic residues) spans 101-126; that stretch reads GKTEDKSPEAITADLEKASLGDKKAE. Acidic residues predominate over residues 127 to 139; it reads DEEEDEGEIDETG. Residues 140 to 178 form the UBA domain; the sequence is LDPKDIEIVVEQTQVSRAKAVKALRNHDGDMVNAIMDLS.

It belongs to the NAC-alpha family. Part of the nascent polypeptide-associated complex (NAC), consisting of EGD2 and EGD1. NAC associates with ribosomes via EGD1.

Its subcellular location is the cytoplasm. The protein localises to the nucleus. In terms of biological role, component of the nascent polypeptide-associated complex (NAC), a dynamic component of the ribosomal exit tunnel, protecting the emerging polypeptides from interaction with other cytoplasmic proteins to ensure appropriate nascent protein targeting. The NAC complex also promotes mitochondrial protein import by enhancing productive ribosome interactions with the outer mitochondrial membrane and blocks the inappropriate interaction of ribosomes translating non-secretory nascent polypeptides with translocation sites in the membrane of the endoplasmic reticulum. EGD2 may also be involved in transcription regulation. The sequence is that of Nascent polypeptide-associated complex subunit alpha (EGD2) from Candida albicans (strain SC5314 / ATCC MYA-2876) (Yeast).